A 595-amino-acid polypeptide reads, in one-letter code: Aspartate--tRNA(Asp/Asn) ligase (595 aa).

An L-aspartate-binding site is contributed by glutamate 174. An aspartate region spans residues glutamine 198–lysine 201. Arginine 220 serves as a coordination point for L-aspartate. ATP is bound by residues arginine 220–glutamate 222 and glutamine 229. Histidine 456 provides a ligand contact to L-aspartate. Glutamate 486 contributes to the ATP binding site. Position 493 (arginine 493) interacts with L-aspartate. Glycine 538–arginine 541 is a binding site for ATP.

Belongs to the class-II aminoacyl-tRNA synthetase family. Type 1 subfamily. In terms of assembly, homodimer.

It localises to the cytoplasm. It catalyses the reaction tRNA(Asx) + L-aspartate + ATP = L-aspartyl-tRNA(Asx) + AMP + diphosphate. Aspartyl-tRNA synthetase with relaxed tRNA specificity since it is able to aspartylate not only its cognate tRNA(Asp) but also tRNA(Asn). Reaction proceeds in two steps: L-aspartate is first activated by ATP to form Asp-AMP and then transferred to the acceptor end of tRNA(Asp/Asn). The protein is Aspartate--tRNA(Asp/Asn) ligase of Gloeobacter violaceus (strain ATCC 29082 / PCC 7421).